A 394-amino-acid polypeptide reads, in one-letter code: Flavohemoprotein (394 aa).

In terms of domain architecture, Globin spans 1–136 (MLSENTINIV…LANVFIQREE (136 aa)). Position 85 (His-85) interacts with heme b. Catalysis depends on charge relay system residues Tyr-95 and Glu-135. The interval 147 to 394 (GGWRGLREFE…YECFGPHKVV (248 aa)) is reductase. The FAD-binding FR-type domain maps to 150 to 255 (RGLREFELVE…AAPAGDFFLD (106 aa)). FAD contacts are provided by residues Tyr-188 and 204–207 (RQYS). Position 268–273 (268–273 (GVGLTP)) interacts with NADP(+). 387–390 (CFGP) is an FAD binding site.

The protein belongs to the globin family. Two-domain flavohemoproteins subfamily. It in the C-terminal section; belongs to the flavoprotein pyridine nucleotide cytochrome reductase family. The cofactor is heme b. Requires FAD as cofactor.

It carries out the reaction 2 nitric oxide + NADPH + 2 O2 = 2 nitrate + NADP(+) + H(+). The catalysed reaction is 2 nitric oxide + NADH + 2 O2 = 2 nitrate + NAD(+) + H(+). Is involved in NO detoxification in an aerobic process, termed nitric oxide dioxygenase (NOD) reaction that utilizes O(2) and NAD(P)H to convert NO to nitrate, which protects the bacterium from various noxious nitrogen compounds. Therefore, plays a central role in the inducible response to nitrosative stress. This Vibrio vulnificus (strain YJ016) protein is Flavohemoprotein.